Consider the following 468-residue polypeptide: ATP synthase subunit beta (468 aa).

Residue Gly155 to Thr162 participates in ATP binding.

Belongs to the ATPase alpha/beta chains family. As to quaternary structure, F-type ATPases have 2 components, CF(1) - the catalytic core - and CF(0) - the membrane proton channel. CF(1) has five subunits: alpha(3), beta(3), gamma(1), delta(1), epsilon(1). CF(0) has three main subunits: a(1), b(2) and c(9-12). The alpha and beta chains form an alternating ring which encloses part of the gamma chain. CF(1) is attached to CF(0) by a central stalk formed by the gamma and epsilon chains, while a peripheral stalk is formed by the delta and b chains.

It localises to the cell membrane. It carries out the reaction ATP + H2O + 4 H(+)(in) = ADP + phosphate + 5 H(+)(out). Produces ATP from ADP in the presence of a proton gradient across the membrane. The catalytic sites are hosted primarily by the beta subunits. The chain is ATP synthase subunit beta from Bacillus cereus (strain B4264).